The chain runs to 147 residues: MKCPFCGHLETQVVETRVSEDADFVRRRRQCSACDKRFTTYERPDVNFPVVVKKDGSRADFESGKVRASMMLALRKRPVSIEQIDNALLRIEQKLLASGLREIDSTKVGELVMRELKKLDKVAYVRFASVYRSFEDVDEFRQLLRDI.

A zinc finger spans residues 3 to 34; the sequence is CPFCGHLETQVVETRVSEDADFVRRRRQCSAC. Residues 49–139 form the ATP-cone domain; it reads PVVVKKDGSR…VYRSFEDVDE (91 aa).

This sequence belongs to the NrdR family. Requires Zn(2+) as cofactor.

Its function is as follows. Negatively regulates transcription of bacterial ribonucleotide reductase nrd genes and operons by binding to NrdR-boxes. In Variovorax paradoxus (strain S110), this protein is Transcriptional repressor NrdR.